We begin with the raw amino-acid sequence, 833 residues long: Leucine--tRNA ligase (833 aa).

The 'HIGH' region motif lies at 41–52; it reads PYPSGAGLHVGH. Residues 610–614 carry the 'KMSKS' region motif; sequence KMSKS. K613 contributes to the ATP binding site.

This sequence belongs to the class-I aminoacyl-tRNA synthetase family.

The protein resides in the cytoplasm. It catalyses the reaction tRNA(Leu) + L-leucine + ATP = L-leucyl-tRNA(Leu) + AMP + diphosphate. This is Leucine--tRNA ligase from Streptococcus gordonii (strain Challis / ATCC 35105 / BCRC 15272 / CH1 / DL1 / V288).